Reading from the N-terminus, the 276-residue chain is Phosphonoacetaldehyde hydrolase (276 aa).

The active-site Nucleophile is aspartate 19. Residues aspartate 19 and alanine 21 each contribute to the Mg(2+) site. Residue lysine 60 is the Schiff-base intermediate with substrate of the active site. Residue aspartate 193 participates in Mg(2+) binding.

This sequence belongs to the HAD-like hydrolase superfamily. PhnX family. In terms of assembly, homodimer. The cofactor is Mg(2+).

It carries out the reaction phosphonoacetaldehyde + H2O = acetaldehyde + phosphate + H(+). Functionally, involved in phosphonate degradation. The protein is Phosphonoacetaldehyde hydrolase of Bordetella bronchiseptica (strain ATCC BAA-588 / NCTC 13252 / RB50) (Alcaligenes bronchisepticus).